The following is a 328-amino-acid chain: Ribosomal RNA large subunit methyltransferase F (328 aa).

The segment at Met-1–Asn-31 is disordered.

It belongs to the methyltransferase superfamily. METTL16/RlmF family.

The protein localises to the cytoplasm. It carries out the reaction adenosine(1618) in 23S rRNA + S-adenosyl-L-methionine = N(6)-methyladenosine(1618) in 23S rRNA + S-adenosyl-L-homocysteine + H(+). In terms of biological role, specifically methylates the adenine in position 1618 of 23S rRNA. This chain is Ribosomal RNA large subunit methyltransferase F, found in Pseudomonas savastanoi pv. phaseolicola (strain 1448A / Race 6) (Pseudomonas syringae pv. phaseolicola (strain 1448A / Race 6)).